Consider the following 105-residue polypeptide: Large ribosomal subunit protein uL24 (105 aa).

The protein belongs to the universal ribosomal protein uL24 family. In terms of assembly, part of the 50S ribosomal subunit.

In terms of biological role, one of two assembly initiator proteins, it binds directly to the 5'-end of the 23S rRNA, where it nucleates assembly of the 50S subunit. One of the proteins that surrounds the polypeptide exit tunnel on the outside of the subunit. In Clostridium botulinum (strain 657 / Type Ba4), this protein is Large ribosomal subunit protein uL24.